Consider the following 395-residue polypeptide: Acetate kinase (395 aa).

Asparagine 7 contributes to the Mg(2+) binding site. Residue lysine 14 coordinates ATP. Arginine 88 lines the substrate pocket. The active-site Proton donor/acceptor is aspartate 145. Residues histidine 205–glycine 209, aspartate 279–arginine 281, and glycine 327–asparagine 331 contribute to the ATP site. Position 381 (glutamate 381) interacts with Mg(2+).

The protein belongs to the acetokinase family. Homodimer. Requires Mg(2+) as cofactor. Mn(2+) serves as cofactor.

The protein resides in the cytoplasm. It catalyses the reaction acetate + ATP = acetyl phosphate + ADP. It functions in the pathway metabolic intermediate biosynthesis; acetyl-CoA biosynthesis; acetyl-CoA from acetate: step 1/2. Its function is as follows. Catalyzes the formation of acetyl phosphate from acetate and ATP. Can also catalyze the reverse reaction. The protein is Acetate kinase of Campylobacter jejuni subsp. jejuni serotype O:6 (strain 81116 / NCTC 11828).